We begin with the raw amino-acid sequence, 95 residues long: Secretoglobin family 2A member 1 (95 aa).

The signal sequence occupies residues 1-18 (MKLVFLFLLVTIPICCYA). Asn-35 and Asn-72 each carry an N-linked (GlcNAc...) asparagine glycan.

It belongs to the secretoglobin family. Lipophilin subfamily. As to quaternary structure, prostatein is composed of three different peptides called C1, C2 and C3. These form covalent C1:C3 (F) and C2:C3 (S) heterodimers whose non-covalent association forms tetrameric (C1:C3/C3:C2) prostatein molecules. Expressed at very low level in ventral prostate.

Its subcellular location is the secreted. Part of prostatein which is the major secretory glycoprotein of ventral prostate gland. Steroid-binding protein; can bind non-polar steroids, cholesterol and a group of small proline-rich peptides. The protein is Secretoglobin family 2A member 1 of Rattus norvegicus (Rat).